A 309-amino-acid polypeptide reads, in one-letter code: Homoserine kinase (309 aa).

91-101 (PIGSGLGSSAC) contributes to the ATP binding site.

This sequence belongs to the GHMP kinase family. Homoserine kinase subfamily.

It localises to the cytoplasm. It carries out the reaction L-homoserine + ATP = O-phospho-L-homoserine + ADP + H(+). It functions in the pathway amino-acid biosynthesis; L-threonine biosynthesis; L-threonine from L-aspartate: step 4/5. Catalyzes the ATP-dependent phosphorylation of L-homoserine to L-homoserine phosphate. In Salmonella arizonae (strain ATCC BAA-731 / CDC346-86 / RSK2980), this protein is Homoserine kinase.